Reading from the N-terminus, the 21-residue chain is Peptide PGLa-R5 (21 aa).

A Leucine amide modification is found at Leu21.

Expressed by the skin glands.

The protein localises to the secreted. Antimicrobial peptide. The polypeptide is Peptide PGLa-R5 (Xenopus ruwenzoriensis (Uganda clawed frog)).